A 405-amino-acid chain; its full sequence is ATP-sensitive inward rectifier potassium channel 15 (405 aa).

Residues 1 to 90 (MVARWVKGSE…LQDLWTTVID (90 aa)) lie on the Cytoplasmic side of the membrane. Residues 91 to 117 (MKWRYKLTLFAATFVMTWFLFGVVYYA) form a helical membrane-spanning segment. Residues 118–143 (IAFIHGDLELGESNSNHTPCIMKVDS) lie on the Extracellular side of the membrane. The segment at residues 144 to 160 (LTGAFLFSLESQTTIGY) is an intramembrane region (helical; Pore-forming). A Selectivity filter motif is present at residues 157-162 (TIGYGV). The Extracellular segment spans residues 161-169 (GVRSITEEC). Residues 170–195 (PHAIFLLVAQLVITTLIEIFITGTFL) form a helical membrane-spanning segment. Topologically, residues 196-405 (AKIARPKKRA…RSLLLQQSNV (210 aa)) are cytoplasmic.

The protein belongs to the inward rectifier-type potassium channel (TC 1.A.2.1) family. KCNJ15 subfamily. As to quaternary structure, can form heteromultimeric channels with Kir5.1/KCNJ16. Interacts with PATJ.

The protein localises to the membrane. It localises to the cell membrane. It catalyses the reaction K(+)(in) = K(+)(out). Its activity is regulated as follows. Channel activity is regulated by variations of cytosolic pH; reversibly inhibited by acidic pH values. Inhibited by Ba(2+) and Cs(+) in a voltage-dependent manner. Functionally, inward rectifier potassium channels are characterized by a greater tendency to allow potassium to flow into the cell rather than out of it. Their voltage dependence is regulated by the concentration of extracellular potassium; as external potassium is raised, the voltage range of the channel opening shifts to more positive voltages. The inward rectification is mainly due to the blockage of outward current by internal magnesium. In Rattus norvegicus (Rat), this protein is ATP-sensitive inward rectifier potassium channel 15 (Kcnj15).